Here is a 170-residue protein sequence, read N- to C-terminus: MSRGQTEGSQAMASSQAAGPGPSPDAIVSVSGTVQKYVAKKKKVLNPEEAELYELTQAAGIVIDQEVFKILVDLLKMNVAPLAVFQMLKSMCAGHRIADTVSADSSSISLAPGHSDVRGRNKPNPTTSTTQGPGERSSREGSSQRIPRQPSGSRMQKSSSSGKSSGGSST.

2 disordered regions span residues 1 to 26 (MSRG…SPDA) and 102 to 170 (SADS…GSST). The segment covering 8 to 20 (GSQAMASSQAAGP) has biased composition (low complexity). The segment covering 123–132 (PNPTTSTTQG) has biased composition (polar residues). The segment covering 151 to 170 (SGSRMQKSSSSGKSSGGSST) has biased composition (low complexity).

This sequence belongs to the MOZART2 family. As to quaternary structure, part of the gamma-tubulin complex. Interacts with TUBG1.

Its subcellular location is the cytoplasm. It localises to the cytoskeleton. The protein resides in the microtubule organizing center. It is found in the centrosome. The protein localises to the spindle. This Xenopus tropicalis (Western clawed frog) protein is Mitotic-spindle organizing protein 2B (mzt2b).